A 457-amino-acid polypeptide reads, in one-letter code: Fibrinogen C domain-containing protein 1 (457 aa).

The segment at Met1–Gln20 is disordered. The Cytoplasmic segment spans residues Met1–Cys33. A helical; Signal-anchor for type II membrane protein transmembrane segment spans residues Thr34 to Met54. The Extracellular segment spans residues Asn55–Asn457. The interval Arg211–Ser235 is disordered. A Fibrinogen C-terminal domain is found at Cys231–Arg454. A glycan (N-linked (GlcNAc...) asparagine) is linked at Asn233. Cys240 and Cys269 are disulfide-bonded. Asn336 carries N-linked (GlcNAc...) asparagine glycosylation. Ca(2+) is bound by residues Asp389 and Asp391. The cysteines at positions 397 and 410 are disulfide-linked.

In terms of assembly, homotetramer; disulfide-linked.

The protein resides in the membrane. Acetyl group-binding receptor which shows a calcium-dependent binding to acetylated structures such as chitin, some N-acetylated carbohydrates, and amino acids. This is Fibrinogen C domain-containing protein 1 (fibcd1) from Xenopus tropicalis (Western clawed frog).